The primary structure comprises 735 residues: Protein RETICULATA-RELATED 5, chloroplastic (735 aa).

A chloroplast-targeting transit peptide spans 1–75 (MKPTTNGGLL…TRRAILVAPP (75 aa)). 2 helical membrane passes run 519–539 (ASVVDFFTVWLPAPTLSFISY) and 582–602 (VIIGGLKLAGVGVVSSFAAVG). Over residues 714–726 (ASQSTVEYSTTEE) the composition is skewed to polar residues. The interval 714–735 (ASQSTVEYSTTEEASMDDLKNQ) is disordered.

Belongs to the RETICULATA family.

It localises to the plastid. The protein localises to the chloroplast membrane. Functionally, may play a role in leaf development. The protein is Protein RETICULATA-RELATED 5, chloroplastic of Arabidopsis thaliana (Mouse-ear cress).